We begin with the raw amino-acid sequence, 92 residues long: Alpha-defensin 25 (92 aa).

The N-terminal stretch at 1–19 (MKTLVLLSALALLAFQVQA) is a signal peptide. A propeptide spanning residues 20–57 (DPIQNRDEESKIDEQPGKEDQAVSVSFGDPEGSSLQEE) is cleaved from the precursor. Positions 24 to 40 (NRDEESKIDEQPGKEDQ) are enriched in basic and acidic residues. A disordered region spans residues 24–53 (NRDEESKIDEQPGKEDQAVSVSFGDPEGSS). Disulfide bonds link C63-C92, C65-C80, and C70-C91.

This sequence belongs to the alpha-defensin family.

It localises to the secreted. May have microbicidal activities. This is Alpha-defensin 25 (Defa25) from Mus musculus (Mouse).